Reading from the N-terminus, the 604-residue chain is Putative O-acetyltransferase SAR0937 (604 aa).

A run of 11 helical transmembrane segments spans residues 15 to 35 (YMPGLDGLRAIAVLGIIIYHL), 43 to 63 (GFLGVDTFFVISGYLITSLLL), 85 to 105 (LLPAVIVLLMVVGTATLLLKS), 150 to 170 (AIEEQFYIFFPVILVTLLLTI), 176 to 196 (IGFIFWGVSIISLGLMMFIYS), 212 to 232 (LQTLLLGVILAFLWPPFKLKN), 240 to 260 (YVIDSIGSLSFIVLILLFFII), 267 to 287 (IYDGGFYLISILTLFIIASVV), 310 to 330 (YSLYLWHFAVISFVHSYYVDG), 332 to 352 (IPVYVYFIDISLTIIFAELSY), and 377 to 397 (FIRMVIVVTLLIPFMLILVGA). Active-site residues include S459, D581, and H584.

The protein belongs to the acyltransferase 3 family.

The protein localises to the cell membrane. The sequence is that of Putative O-acetyltransferase SAR0937 from Staphylococcus aureus (strain MRSA252).